A 196-amino-acid polypeptide reads, in one-letter code: Putative NADH dehydrogenase/NAD(P)H nitroreductase PXO_03909 (196 aa).

It belongs to the nitroreductase family. HadB/RutE subfamily. FMN is required as a cofactor.

In Xanthomonas oryzae pv. oryzae (strain PXO99A), this protein is Putative NADH dehydrogenase/NAD(P)H nitroreductase PXO_03909.